Reading from the N-terminus, the 234-residue chain is 2,3-bisphosphoglycerate-dependent phosphoglycerate mutase (234 aa).

Residues 8–15 (RHGESVWN), 21–22 (TG), Arg60, 87–90 (ERHY), Lys98, 114–115 (RR), and 183–184 (GN) each bind substrate. His9 serves as the catalytic Tele-phosphohistidine intermediate. The active-site Proton donor/acceptor is Glu87.

The protein belongs to the phosphoglycerate mutase family. BPG-dependent PGAM subfamily. Homodimer.

The catalysed reaction is (2R)-2-phosphoglycerate = (2R)-3-phosphoglycerate. It participates in carbohydrate degradation; glycolysis; pyruvate from D-glyceraldehyde 3-phosphate: step 3/5. In terms of biological role, catalyzes the interconversion of 2-phosphoglycerate and 3-phosphoglycerate. The polypeptide is 2,3-bisphosphoglycerate-dependent phosphoglycerate mutase (Geobacter sp. (strain M21)).